The chain runs to 691 residues: Probable E3 ubiquitin-protein ligase RHG1A (691 aa).

Disordered regions lie at residues 71–91, 151–235, 316–336, 349–373, and 395–501; these read SLGE…NEQR, GPGT…PRGM, SFVV…GSRT, VGGT…SRSI, and QSSR…MHNR. Over residues 80-91 the composition is skewed to basic and acidic residues; that stretch reads TKDEASSHNEQR. Polar residues-rich tracts occupy residues 204–213 and 317–328; these read GESSSWTPGS and FVVSRNPNSTPV. Positions 361 to 370 are enriched in basic and acidic residues; that stretch reads RNLHLDETRS. Residues 395–406 are compositionally biased toward polar residues; it reads QSSRNVTNGNLN. A compositionally biased stretch (low complexity) spans 407 to 419; the sequence is SASSVSRTGSTTS. Positions 429–440 are enriched in polar residues; the sequence is NLAWTSYQNSPH. Residues 454-465 are compositionally biased toward low complexity; sequence RSLLSSLAADAT. Residues 637 to 678 form an RING-type; atypical zinc finger; that stretch reads CCVCQEEYTEGEDMGTLECGHEFHSQCIKEWLKQKNLCPICK.

In terms of tissue distribution, expressed in stems, flowers, green siliques, cauline leaves, seeds and roots.

It carries out the reaction S-ubiquitinyl-[E2 ubiquitin-conjugating enzyme]-L-cysteine + [acceptor protein]-L-lysine = [E2 ubiquitin-conjugating enzyme]-L-cysteine + N(6)-ubiquitinyl-[acceptor protein]-L-lysine.. It functions in the pathway protein modification; protein ubiquitination. Functionally, probable E3 ubiquitin-protein ligase that may possess E3 ubiquitin ligase activity in vitro. This Arabidopsis thaliana (Mouse-ear cress) protein is Probable E3 ubiquitin-protein ligase RHG1A.